A 393-amino-acid polypeptide reads, in one-letter code: Chorismate synthase (393 aa).

2 residues coordinate NADP(+): R40 and R46. FMN is bound by residues 135 to 137, 257 to 258, G301, 316 to 320, and R342; these read RAS, QA, and KPIAT. The tract at residues 280–306 is disordered; it reads DEIDVGPDGIRRRSNRAGGVEGGMSTG.

Belongs to the chorismate synthase family. Homotetramer. FMNH2 is required as a cofactor.

It catalyses the reaction 5-O-(1-carboxyvinyl)-3-phosphoshikimate = chorismate + phosphate. Its pathway is metabolic intermediate biosynthesis; chorismate biosynthesis; chorismate from D-erythrose 4-phosphate and phosphoenolpyruvate: step 7/7. In terms of biological role, catalyzes the anti-1,4-elimination of the C-3 phosphate and the C-6 proR hydrogen from 5-enolpyruvylshikimate-3-phosphate (EPSP) to yield chorismate, which is the branch point compound that serves as the starting substrate for the three terminal pathways of aromatic amino acid biosynthesis. This reaction introduces a second double bond into the aromatic ring system. The polypeptide is Chorismate synthase (Thermobifida fusca (strain YX)).